A 102-amino-acid polypeptide reads, in one-letter code: Citrate lyase acyl carrier protein (102 aa).

O-(phosphoribosyl dephospho-coenzyme A)serine is present on Ser-14.

The protein belongs to the CitD family. Oligomer with a subunit composition of (alpha,beta,gamma)6.

The protein localises to the cytoplasm. Functionally, covalent carrier of the coenzyme of citrate lyase. This is Citrate lyase acyl carrier protein from Streptococcus mutans serotype c (strain ATCC 700610 / UA159).